The primary structure comprises 127 residues: Fluoride-specific ion channel FluC (127 aa).

A run of 4 helical transmembrane segments spans residues 4–24 (LLLAVFIGGGTGSVARWLLSM), 35–55 (LGTLTANLIGAFIIGMGFAWF), 71–91 (TGFCGGLTTFSTFSAEVVFLL), and 103–123 (VFVNLLGSFAMTALAFWLFSA). Na(+)-binding residues include glycine 75 and threonine 78.

It belongs to the fluoride channel Fluc/FEX (TC 1.A.43) family.

Its subcellular location is the cell inner membrane. It catalyses the reaction fluoride(in) = fluoride(out). With respect to regulation, na(+) is not transported, but it plays an essential structural role and its presence is essential for fluoride channel function. Its function is as follows. Fluoride-specific ion channel. Important for reducing fluoride concentration in the cell, thus reducing its toxicity. The polypeptide is Fluoride-specific ion channel FluC (Escherichia coli O7:K1 (strain IAI39 / ExPEC)).